The following is a 388-amino-acid chain: GTPase Obg (388 aa).

An Obg domain is found at Met1 to Leu159. The 174-residue stretch at Ala160–Glu333 folds into the OBG-type G domain. GTP is bound by residues Gly166–Ser173, Phe191–Ile195, Asp213–Gly216, Asn283–Asp286, and Ser314–Val316. Mg(2+)-binding residues include Ser173 and Thr193. The tract at residues Asn359 to Asp380 is disordered. Positions Ile364–Asp380 are enriched in acidic residues.

It belongs to the TRAFAC class OBG-HflX-like GTPase superfamily. OBG GTPase family. As to quaternary structure, monomer. It depends on Mg(2+) as a cofactor.

It localises to the cytoplasm. An essential GTPase which binds GTP, GDP and possibly (p)ppGpp with moderate affinity, with high nucleotide exchange rates and a fairly low GTP hydrolysis rate. Plays a role in control of the cell cycle, stress response, ribosome biogenesis and in those bacteria that undergo differentiation, in morphogenesis control. This is GTPase Obg from Vibrio vulnificus (strain YJ016).